The primary structure comprises 377 residues: MLAGLRRRGSMTTPPGPEIPPPHQGGFYSAGHHPQRPWPETPPPKTRGGVKWMLGAVALLAVVGVTVAVTLAVTGKDKRDAIPPGSGVSGSPTASDIASADDSGPVSVITEDPTCAAQGPILETFAAQQSQLWVERDPALGRESWSPELRADYEKVGKAMRTAADQVAQLAKITPHRAMRELYEQFIAYARAYADNIPNYTPPTDNLARVAVTAADAISYICAAVSYGSAAARAPLVENRPAPTNVAPLGNPSEPERFLTAPNPVCGEWSSVLNAFQTDTTEWLKTDPDISSSQWSIEQKQINENVIPIMKRFANQLYLLGKDSGNPTFRDIADLSVQYRLAYVAAIPTYTPADKYLANASIRLATMANVACRAAAD.

The disordered stretch occupies residues 1–46 (MLAGLRRRGSMTTPPGPEIPPPHQGGFYSAGHHPQRPWPETPPPKT). 2 stretches are compositionally biased toward pro residues: residues 14–23 (PPGPEIPPPH) and 36–45 (RPWPETPPPK). A helical transmembrane segment spans residues 53 to 73 (MLGAVALLAVVGVTVAVTLAV). Residues 77-107 (DKRDAIPPGSGVSGSPTASDIASADDSGPVS) form a disordered region.

The protein localises to the cell inner membrane. In terms of biological role, may be involved in the ESX-1 / type VII specialized secretion system (T7SS), which exports several proteins including EsxA and EsxB. Involved in DNA conjugation in the recipient strain. This is an uncharacterized protein from Mycolicibacterium smegmatis (strain MKD8) (Mycobacterium smegmatis).